Reading from the N-terminus, the 965-residue chain is Meiosis-specific coiled-coil domain-containing protein MEIOC (965 aa).

2 disordered regions span residues 1 to 22 (MEVS…EGPE) and 946 to 965 (VHES…TSKH). The segment covering 949-965 (SINSSNPMNQRGETSKH) has biased composition (polar residues).

In terms of assembly, interacts with YTHDC2; binds transcripts that regulate the mitotic cell cycle inhibiting progression into metaphase, thereby allowing meiotic prophase to proceed normally. Interacts with RBM46. In terms of tissue distribution, expressed specifically in fetal ovary and postnatal and adult testes (at protein level). In adult testis expressed in spermatocytes, beginning in preleptotene and extending through most stages of meiotic prophase I, including leptotene, zygotene, and pachytene.

The protein resides in the cytoplasm. It localises to the nucleus. Is required for meiosis completion in both male and female germ cells. Confers stability to numerous meiotic mRNAs in gonads allowing proper initiation and progression into meiosis prophase I. The function may involve YTHDC2 and is independent of induction by retinoic acid (RA). Maintains an extended meiotic prophase I by properly promoting the transition from a mitotic to a meiotic cell cycle program by binding transcripts through its interaction with YTHDC2 that regulate the mitotic cell cycle. The protein is Meiosis-specific coiled-coil domain-containing protein MEIOC of Mus musculus (Mouse).